We begin with the raw amino-acid sequence, 228 residues long: Small ribosomal subunit protein uS3 (228 aa).

The KH type-2 domain occupies 39 to 107 (VREYLQDKLK…PVHINIEEIR (69 aa)).

Belongs to the universal ribosomal protein uS3 family. Part of the 30S ribosomal subunit. Forms a tight complex with proteins S10 and S14.

Its function is as follows. Binds the lower part of the 30S subunit head. Binds mRNA in the 70S ribosome, positioning it for translation. The chain is Small ribosomal subunit protein uS3 from Stutzerimonas stutzeri (strain A1501) (Pseudomonas stutzeri).